The following is a 262-amino-acid chain: Iso-A82775C biosynthesis cluster protein B (262 aa).

Functionally, part of the gene cluster that mediates the biosynthesis of iso-A82775C, a enylepoxycyclohexane and biosynthetic precursor of the chloropestolide anticancer natural products. Within the cluster, the prenyltransferase iacE prenylates siccayne to generate pestalodiol E, using dimethylallyl diphosphate (DMAPP) as cosubstrate. The probable oxidoreductase iacF is then involved in the epoxidation of pestalodiol F to pestalodiol F, which is further converted to pestalofone A by the short-chain dehydrogenase/reductase iacG. Iso-A82775C is subsequently generated from pestalofone A by the short-chain dehydrogenase/reductase iacC. Iso-A82775C is further condensed with maldoxin via a Diels-Alder reaction to produce the anticancer natural products chloropestolides A to E. The chain is Iso-A82775C biosynthesis cluster protein B from Pestalotiopsis fici (strain W106-1 / CGMCC3.15140).